The chain runs to 437 residues: Magnetosome protein MamN (437 aa).

The next 11 helical transmembrane spans lie at 26-46, 53-73, 95-115, 136-156, 174-194, 226-246, 252-268, 281-301, 320-340, 358-378, and 416-436; these read LAVL…GSYT, SVYF…ALLA, WILV…NSLV, VPVI…TMIG, FIAG…VFFE, LLSY…LAGP, GWIA…LGRF, DILF…VGIL, AILL…GTSA, AAWW…LPGA, and WGMP…AVLV.

This sequence belongs to the arsenite-antimonite (ArsB) efflux (TC 2.A.45) family.

It localises to the magnetosome membrane. Plays a role in biomineralization; might regulate pH in the magnetosome. This Paramagnetospirillum magneticum (strain ATCC 700264 / AMB-1) (Magnetospirillum magneticum) protein is Magnetosome protein MamN (mamN).